The primary structure comprises 833 residues: Zinc transporter ZIP10 (833 aa).

An N-terminal signal peptide occupies residues 1–25 (MKVHIHTKFCLICLLTFIFHHCNHC). Positions 30 to 48 (DHGPEELHRHHRGMTESES) are enriched in basic and acidic residues. Disordered stretches follow at residues 30–54 (DHGP…FSVQ) and 137–167 (AENH…IKAD). Residues 137–147 (AENHTTTSVTS) show a composition bias toward polar residues. Positions 152-167 (KCDPEKEAAELPIKAD) are enriched in basic and acidic residues. N-linked (GlcNAc...) asparagine glycans are attached at residues Asn191 and Asn198. The segment covering 200 to 209 (SVAHSEHGEP) has biased composition (basic and acidic residues). 2 disordered regions span residues 200–257 (SVAH…NHDH) and 271–335 (RVHS…EDDR). Asn218 is a glycosylation site (N-linked (GlcNAc...) asparagine). The segment covering 229 to 241 (VKVRRKEKGKRKK) has biased composition (basic residues). 2 stretches are compositionally biased toward basic and acidic residues: residues 281–315 (HLPE…EAPH) and 326–335 (SHKDQSEDDR). The N-linked (GlcNAc...) asparagine glycan is linked to Asn341. The next 2 membrane-spanning stretches (helical) occupy residues 413–433 (IISI…VPII) and 440–460 (FLLT…ALLH). Positions 466–485 (QGGHDHSHQHTHGHGHSHGH) are disordered. A helical transmembrane segment spans residues 497 to 517 (VLKGLVALGGIYLLFIIEHCI). A phosphothreonine mark is found at Thr538 and Thr555. Ser593 carries the phosphoserine modification. The next 4 helical transmembrane spans lie at 689–709 (AIGA…IAVF), 734–754 (IVYN…GTAV), 761–781 (ITLW…LVDM), and 803–823 (FILQ…IALY).

It belongs to the ZIP transporter (TC 2.A.5) family. As to quaternary structure, interacts with SLC39A6. This interaction triggers cells to undergo EMT and mitosis. Found in a complex with SLC39A6, SLC39A10 and with the 'Ser-727' phosphorylated form of STAT3 throughout mitosis. Found in a complex with SLC39A6, SLC39A10 and with NCAM1; this complex controls NCAM1 phosphorylation and integration into focal adhesion complexes during epithelial-tomesenchymal transition. Found in a complex with SLC39A6, SLC39A10 and with GSK3B that controls NCAM1 phosphorylation. In terms of processing, undergoes N-terminal ectodomain shedding. As to expression, expressed in the liver, kidney and brain.

The protein resides in the cell membrane. It is found in the apical cell membrane. It catalyses the reaction Zn(2+)(in) = Zn(2+)(out). In terms of biological role, zinc-influx transporter. When associated with SLC39A6, the heterodimer formed by SLC39A10 and SLC39A6 mediates cellular zinc uptake to trigger cells to undergo epithelial-to-mesenchymal transition (EMT). mediates cellular zinc uptake to trigger cells to undergo epithelial-to-mesenchymal transition (EMT). SLC39A10-SLC39A6 heterodimers play also an essentiel role in initiating mitosis by importing zinc into cells to initiate a pathway resulting in the onset of mitosis. Plays an important for both mature B-cell maintenance and humoral immune responses. When associated with SLC39A10, the heterodimer controls NCAM1 phosphorylation and integration into focal adhesion complexes during EMT. This is Zinc transporter ZIP10 from Mus musculus (Mouse).